The sequence spans 215 residues: Urease accessory protein UreE (215 aa).

Positions 134-215 (FDPEGGAYAP…HGHSHKHDHK (82 aa)) are disordered. Over residues 164–206 (GHHDHADHEHDHKHDHGKHDHAGHDHAHDHHVHDEHCGHDHGH) the composition is skewed to basic and acidic residues.

Belongs to the UreE family.

It localises to the cytoplasm. Its function is as follows. Involved in urease metallocenter assembly. Binds nickel. Probably functions as a nickel donor during metallocenter assembly. This chain is Urease accessory protein UreE, found in Rhodopseudomonas palustris (strain HaA2).